The chain runs to 432 residues: Enolase (432 aa).

Glutamine 163 provides a ligand contact to (2R)-2-phosphoglycerate. Glutamate 205 acts as the Proton donor in catalysis. Mg(2+) is bound by residues aspartate 242, glutamate 285, and aspartate 312. (2R)-2-phosphoglycerate is bound by residues lysine 337, arginine 366, serine 367, and lysine 388. Catalysis depends on lysine 337, which acts as the Proton acceptor.

It belongs to the enolase family. Requires Mg(2+) as cofactor.

Its subcellular location is the cytoplasm. The protein localises to the secreted. It is found in the cell surface. It carries out the reaction (2R)-2-phosphoglycerate = phosphoenolpyruvate + H2O. It participates in carbohydrate degradation; glycolysis; pyruvate from D-glyceraldehyde 3-phosphate: step 4/5. In terms of biological role, catalyzes the reversible conversion of 2-phosphoglycerate (2-PG) into phosphoenolpyruvate (PEP). It is essential for the degradation of carbohydrates via glycolysis. This chain is Enolase, found in Bifidobacterium longum (strain DJO10A).